We begin with the raw amino-acid sequence, 492 residues long: 5-taurinomethyluridine-[tRNA] synthase subunit GTPB3, mitochondrial (492 aa).

Residues 1–20 constitute a mitochondrion transit peptide; the sequence is MWRGLSALVTRPASAPLRLC. Residues arginine 52, glutamate 112, and lysine 152 each contribute to the 5,10-methylenetetrahydrofolate site. Residues 249-416 form the TrmE-type G domain; that stretch reads GANVVVAGPP…LLQALKTELA (168 aa). GTP is bound by residues 256 to 263, 282 to 286, 303 to 306, and 374 to 377; these read GPPNAGKS, GTTRD, DTAG, and NKSD. Asparagine 259 lines the K(+) pocket. 2 residues coordinate Mg(2+): serine 263 and threonine 284. Lysine 492 contacts 5,10-methylenetetrahydrofolate.

It belongs to the TRAFAC class TrmE-Era-EngA-EngB-Septin-like GTPase superfamily. TrmE GTPase family. Homodimer; forms a dimer in the presence of potassium. Interacts with MTO1; forms the GTPBP3-MTO1 complex composed of homodimers of GTPBP3 and MTO1. Requires K(+) as cofactor.

The protein localises to the mitochondrion. It catalyses the reaction GTP + H2O = GDP + phosphate + H(+). GTPase component of the GTPBP3-MTO1 complex that catalyzes the 5-taurinomethyluridine (taum(5)U) modification at the 34th wobble position (U34) of mitochondrial tRNAs (mt-tRNAs), which plays a role in mt-tRNA decoding and mitochondrial translation. Taum(5)U formation on mammalian mt-tRNA requires the presence of both GTPBP3-mediated GTPase activity and MTO1 catalytic activity. This Rattus norvegicus (Rat) protein is 5-taurinomethyluridine-[tRNA] synthase subunit GTPB3, mitochondrial.